The chain runs to 2290 residues: Protein Ycf2 (2290 aa).

ATP is bound at residue 1638 to 1645 (GSIGTGRS).

The protein belongs to the Ycf2 family.

It localises to the plastid. It is found in the chloroplast stroma. In terms of biological role, probable ATPase of unknown function. Its presence in a non-photosynthetic plant (Epifagus virginiana) and experiments in tobacco indicate that it has an essential function which is probably not related to photosynthesis. The protein is Protein Ycf2 of Phalaenopsis aphrodite subsp. formosana (Moth orchid).